Reading from the N-terminus, the 594-residue chain is TOX high mobility group box family member 4-B (594 aa).

Disordered stretches follow at residues 160–225 (GTIL…PQKP) and 522–545 (ESPPPQMDVELVSSSPPPSLSPQC). Positions 207-217 (KPKTPKKKKKK) are enriched in basic residues. The Nuclear localization signal motif lies at 212-217 (KKKKKK). The segment at residues 222-290 (PQKPLSAYAL…EYLKALALYK (69 aa)) is a DNA-binding region (HMG box).

As to quaternary structure, component of the PNUTS-PP1 phosphatase complex.

Its subcellular location is the nucleus. It is found in the chromosome. Functionally, transcription factor that modulates cell fate reprogramming from the somatic state to the pluripotent and neuronal fate. Also acts as a regulatory component of protein phosphatase 1 (PP1) complexes. Component of the PNUTS-PP1 protein phosphatase complex, a PP1 complex that regulates RNA polymerase II transcription pause-release. PNUTS-PP1 also plays a role in the control of chromatin structure and cell cycle progression during the transition from mitosis into interphase. The polypeptide is TOX high mobility group box family member 4-B (tox4-b) (Xenopus laevis (African clawed frog)).